The following is a 132-amino-acid chain: Small ribosomal subunit protein uS8 (132 aa).

Belongs to the universal ribosomal protein uS8 family. In terms of assembly, part of the 30S ribosomal subunit. Contacts proteins S5 and S12.

Its function is as follows. One of the primary rRNA binding proteins, it binds directly to 16S rRNA central domain where it helps coordinate assembly of the platform of the 30S subunit. This is Small ribosomal subunit protein uS8 from Cereibacter sphaeroides (strain ATCC 17029 / ATH 2.4.9) (Rhodobacter sphaeroides).